The chain runs to 1377 residues: Carboxypeptidase D (1377 aa).

The signal sequence occupies residues 1 to 37 (MASGRDERPPWRLGRLRLLPPPPLLLLLLLLRSSAQA). Over 38 to 1296 (AHIKKAEATT…DNRIFGLPRE (1259 aa)) the chain is Extracellular. One can recognise a Peptidase M14 1 domain in the interval 62-379 (HYYHEAALGE…ESLITLIEKV (318 aa)). Zn(2+) is bound by residues His-138 and Glu-141. The Cell attachment site motif lies at 161–163 (RGD). Residues Asn-171 and Asn-216 are each glycosylated (N-linked (GlcNAc...) asparagine). The interval 188–231 (RAREGDCGLGDSGPPGTSGRDNSRGRDLNRSFPDQFSTGEPPSL) is disordered. Residue His-256 participates in Zn(2+) binding. The residue at position 264 (Tyr-264) is a Phosphotyrosine. Ser-269 carries the phosphoserine modification. Glu-349 acts as the Proton donor/acceptor in catalysis. 4 N-linked (GlcNAc...) asparagine glycosylation sites follow: Asn-398, Asn-409, Asn-428, and Asn-521. The 291-residue stretch at 501-791 (HHHHFPDMEI…RSLIQFMKQV (291 aa)) folds into the Peptidase M14 2 domain. Zn(2+)-binding residues include His-563 and Glu-566. Residue Asn-625 is glycosylated (N-linked (GlcNAc...) asparagine). His-670 provides a ligand contact to Zn(2+). Residue Glu-761 is the Proton donor/acceptor of the active site. 6 N-linked (GlcNAc...) asparagine glycosylation sites follow: Asn-810, Asn-854, Asn-866, Asn-878, Asn-952, and Asn-975. The disordered stretch occupies residues 874 to 898 (ADANNESKKGRGHSTSTDDTSDPTS). Residues 929–1208 (RYHSYKDLSE…KSLLSMLVEV (280 aa)) form the Peptidase M14 3 domain. Positions 1038–1047 (RERAQEKDCT) are enriched in basic and acidic residues. The tract at residues 1038 to 1064 (RERAQEKDCTSKTGHTNAHGKDLDTDF) is disordered. Residues Asn-1067 and Asn-1139 are each glycosylated (N-linked (GlcNAc...) asparagine). A helical transmembrane segment spans residues 1297–1317 (LVVTVSGATMSALILTACIIW). S-palmitoyl cysteine attachment occurs at residues Cys-1314, Cys-1318, and Cys-1320. Over 1318 to 1377 (CICSIKSNRHKDGFHRLRQHHDEYEDEIRMMSTGSKKSLLSHEFQDETDTEEETLYSSKH) the chain is Cytoplasmic. Phosphoserine is present on residues Ser-1355 and Ser-1358. Residues 1356–1377 (LLSHEFQDETDTEEETLYSSKH) are disordered. Thr-1365 and Thr-1367 each carry phosphothreonine.

This sequence belongs to the peptidase M14 family. It depends on Zn(2+) as a cofactor.

It localises to the cell membrane. It catalyses the reaction Releases C-terminal Arg and Lys from polypeptides.. The polypeptide is Carboxypeptidase D (Cpd) (Mus musculus (Mouse)).